An 82-amino-acid chain; its full sequence is Myrmicitoxin(1)-Pm3a (82 aa).

The first 23 residues, 1-23 (MEIPKLLYIAVIAIGLSGSLTCA), serve as a signal peptide directing secretion. Residues 24–59 (TPLANPLADPEAEAEAKATAEATAEAIAEALAEPEP) constitute a propeptide that is removed on maturation. A Leucine amide modification is found at leucine 81.

The protein belongs to the formicidae venom clade 1 family. In terms of tissue distribution, expressed by the venom gland.

It is found in the secreted. Its function is as follows. Toxin that causes a slowly developing temporary paralysis when intrathoracically injected into insects (blowflies). Does not cause spontaneous nocifensive behaviors by intraplantar injection in mice. The sequence is that of Myrmicitoxin(1)-Pm3a from Pogonomyrmex maricopa (Maricopa harvester ant).